The chain runs to 211 residues: LexA repressor (211 aa).

Positions 31–51 (RAEISKELGFRSPNAAEEHLK) form a DNA-binding region, H-T-H motif. Catalysis depends on for autocatalytic cleavage activity residues Ser127 and Lys164.

Belongs to the peptidase S24 family. As to quaternary structure, homodimer.

The catalysed reaction is Hydrolysis of Ala-|-Gly bond in repressor LexA.. Its function is as follows. Represses a number of genes involved in the response to DNA damage (SOS response), including recA and lexA. In the presence of single-stranded DNA, RecA interacts with LexA causing an autocatalytic cleavage which disrupts the DNA-binding part of LexA, leading to derepression of the SOS regulon and eventually DNA repair. This chain is LexA repressor, found in Pasteurella multocida (strain Pm70).